Reading from the N-terminus, the 461-residue chain is Phenolic glucoside malonyltransferase 1 (461 aa).

The Proton acceptor role is filled by His-167. An HXXXD motif motif is present at residues His-167–Asp-171. Malonyl-CoA is bound at residue Ser-281–Thr-282. Asp-400 (proton acceptor) is an active-site residue. Residues Asp-400 to Gly-404 carry the DFGWG motif motif.

It belongs to the plant acyltransferase family. Phenolic glucoside malonyltransferase subfamily. Expressed in all tissues. Most highly expressed in the abdomen and especially in the gut.

The catalysed reaction is a flavonol 3-O-beta-D-glucoside + malonyl-CoA = a flavonol 3-O-(6-O-malonyl-beta-D-glucoside) + CoA. It catalyses the reaction kaempferol 3-O-beta-D-glucoside + malonyl-CoA = kaempferol 3-O-(6-O-malonyl-beta-D-glucoside) + CoA. The enzyme catalyses quercetin 3-O-beta-D-glucoside + malonyl-CoA = quercetin 3-O-(6-O-malonyl-beta-D-glucoside) + CoA. It carries out the reaction a flavonol 7-O-beta-D-glucoside + malonyl-CoA = a flavonol 7-O-(6-O-malonyl-beta-D-glucoside) + CoA. The catalysed reaction is (2S)-naringenin 7-O-beta-D-glucoside + malonyl-CoA = (2S)-naringenin 7-O-(6-O-malonyl-beta-D-glucoside) + CoA. It catalyses the reaction kaempferol 7-O-beta-D-glucoside + malonyl-CoA = kaempferol 7-O-(6-O-malonyl-beta-D-glucoside) + CoA. The enzyme catalyses apigenin 7-O-beta-D-glucoside + malonyl-CoA = apigenin 7-O-(6-O-malonyl-beta-D-glucoside) + CoA. It carries out the reaction rhaponticin + malonyl-CoA = 6-O-malonyl-rhaponticin + CoA. Functionally, phenolic glucoside malonyltransferase that neutralizes phenolic glycosides in host plants. Catalyzes the transfer of a malonyl group from malonyl-CoA to the phenolic glycosides, leading to their detoxification. Phenolic glycosides, which are among the most abundant plant secondary metabolites, act as plant defense compounds: they strongly affect growth, development and behavior of insect herbivores. Has malonyltransferase activity against flavonoids kaempferol 3-O-glucoside, kaempferol 7-O-glucoside, isoquercetin (quercetin 3-O-beta-D-glucopyranoside), apigetrin (apigenin 7-O-beta-D-glucoside) and prunin (naringenin 7-O-beta-D-glucoside). Also has activity toward non-flavonoid rhaponticin, but with lower efficiency. This Bemisia tabaci (Sweetpotato whitefly) protein is Phenolic glucoside malonyltransferase 1.